A 329-amino-acid chain; its full sequence is Olfactory receptor 5AL1 (329 aa).

At 1–44 the chain is on the extracellular side; the sequence is MCALKGFLEENFYTYSVAKGNHSTVYEFILLGLTDNAELQVTLF. Asn21 carries an N-linked (GlcNAc...) asparagine glycan. Residues 45–65 traverse the membrane as a helical segment; it reads GIFLVVYLASFMGNFGLIMLI. The Cytoplasmic portion of the chain corresponds to 66–73; that stretch reads QISPQLHT. The helical transmembrane segment at 74–94 threads the bilayer; sequence PMYFFLSHLAFVDFSFTSSVA. Residues 95-113 are Extracellular-facing; sequence PNTLVNFLCEVKSITFYAC. Cys113 and Cys205 are oxidised to a cystine. The helical transmembrane segment at 114–134 threads the bilayer; sequence AIQVCCFITFVVCELYLLSIM. The Cytoplasmic segment spans residues 135–157; sequence AYDRYVAICNPLLYVILIPRKLC. Residues 158–178 traverse the membrane as a helical segment; the sequence is IKLIASTYVYGFTVGLVQTVA. Residues 179-220 are Extracellular-facing; it reads TSYLSFCDSNVINHFYHDDVPLVALACSDTHVKELMLLIIAG. Residues 221 to 241 form a helical membrane-spanning segment; that stretch reads FNTLCSLVIVLISYGFIFFAI. At 242-253 the chain is on the cytoplasmic side; that stretch reads LRIHSAEGRQKA. Residues 254 to 274 traverse the membrane as a helical segment; the sequence is FSTSASHLTSITIFYGTIIFM. The Extracellular portion of the chain corresponds to 275–287; it reads YPQPKSSHSLNMD. The helical transmembrane segment at 288-308 threads the bilayer; sequence KVASVFNVVVIPTLNPLIYSL. Residues 309 to 329 are Cytoplasmic-facing; the sequence is RNQEVKNALKRIIEKLCLAVK.

Belongs to the G-protein coupled receptor 1 family.

The protein localises to the cell membrane. Odorant receptor. This chain is Olfactory receptor 5AL1 (OR5AL1), found in Homo sapiens (Human).